Reading from the N-terminus, the 302-residue chain is 4-hydroxy-tetrahydrodipicolinate synthase (302 aa).

Thr-55 contacts pyruvate. The Proton donor/acceptor role is filled by Tyr-144. Residue Lys-172 is the Schiff-base intermediate with substrate of the active site. Val-214 contacts pyruvate.

It belongs to the DapA family. In terms of assembly, homotetramer; dimer of dimers.

It is found in the cytoplasm. It carries out the reaction L-aspartate 4-semialdehyde + pyruvate = (2S,4S)-4-hydroxy-2,3,4,5-tetrahydrodipicolinate + H2O + H(+). It functions in the pathway amino-acid biosynthesis; L-lysine biosynthesis via DAP pathway; (S)-tetrahydrodipicolinate from L-aspartate: step 3/4. Catalyzes the condensation of (S)-aspartate-beta-semialdehyde [(S)-ASA] and pyruvate to 4-hydroxy-tetrahydrodipicolinate (HTPA). The chain is 4-hydroxy-tetrahydrodipicolinate synthase from Synechococcus sp. (strain CC9902).